We begin with the raw amino-acid sequence, 121 residues long: NADH-quinone oxidoreductase subunit A 1 (121 aa).

The next 3 membrane-spanning stretches (helical) occupy residues Phe-6 to Gly-26, Leu-62 to Val-82, and Phe-90 to Ile-110.

The protein belongs to the complex I subunit 3 family. In terms of assembly, NDH-1 is composed of 14 different subunits. Subunits NuoA, H, J, K, L, M, N constitute the membrane sector of the complex.

The protein localises to the cell inner membrane. The catalysed reaction is a quinone + NADH + 5 H(+)(in) = a quinol + NAD(+) + 4 H(+)(out). In terms of biological role, NDH-1 shuttles electrons from NADH, via FMN and iron-sulfur (Fe-S) centers, to quinones in the respiratory chain. The immediate electron acceptor for the enzyme in this species is believed to be a menaquinone. Couples the redox reaction to proton translocation (for every two electrons transferred, four hydrogen ions are translocated across the cytoplasmic membrane), and thus conserves the redox energy in a proton gradient. The protein is NADH-quinone oxidoreductase subunit A 1 of Chloroherpeton thalassium (strain ATCC 35110 / GB-78).